A 293-amino-acid chain; its full sequence is 4-hydroxy-tetrahydrodipicolinate synthase (293 aa).

Threonine 44 is a binding site for pyruvate. The active-site Proton donor/acceptor is tyrosine 132. Lysine 161 serves as the catalytic Schiff-base intermediate with substrate. Isoleucine 205 contributes to the pyruvate binding site.

The protein belongs to the DapA family. Homotetramer; dimer of dimers.

It localises to the cytoplasm. The enzyme catalyses L-aspartate 4-semialdehyde + pyruvate = (2S,4S)-4-hydroxy-2,3,4,5-tetrahydrodipicolinate + H2O + H(+). It participates in amino-acid biosynthesis; L-lysine biosynthesis via DAP pathway; (S)-tetrahydrodipicolinate from L-aspartate: step 3/4. Functionally, catalyzes the condensation of (S)-aspartate-beta-semialdehyde [(S)-ASA] and pyruvate to 4-hydroxy-tetrahydrodipicolinate (HTPA). The protein is 4-hydroxy-tetrahydrodipicolinate synthase of Thermosipho africanus (strain TCF52B).